The primary structure comprises 137 residues: Large ribosomal subunit protein uL16 (137 aa).

It belongs to the universal ribosomal protein uL16 family. Part of the 50S ribosomal subunit.

Functionally, binds 23S rRNA and is also seen to make contacts with the A and possibly P site tRNAs. The polypeptide is Large ribosomal subunit protein uL16 (Pseudomonas aeruginosa (strain LESB58)).